A 177-amino-acid polypeptide reads, in one-letter code: ATP-dependent protease subunit HslV (177 aa).

Residue T6 is part of the active site. Na(+) contacts are provided by A162, C165, and T168.

This sequence belongs to the peptidase T1B family. HslV subfamily. In terms of assembly, a double ring-shaped homohexamer of HslV is capped on each side by a ring-shaped HslU homohexamer. The assembly of the HslU/HslV complex is dependent on binding of ATP.

The protein localises to the cytoplasm. It carries out the reaction ATP-dependent cleavage of peptide bonds with broad specificity.. With respect to regulation, allosterically activated by HslU binding. Functionally, protease subunit of a proteasome-like degradation complex believed to be a general protein degrading machinery. This is ATP-dependent protease subunit HslV from Lawsonia intracellularis (strain PHE/MN1-00).